Here is a 432-residue protein sequence, read N- to C-terminus: Short transient receptor potential channel 2 homolog (432 aa).

4 helical membrane passes run 1–21, 52–72, 96–116, and 162–182; these read MVIL…AGLA, FLAE…LASI, FMFI…NIYV, and LYGI…IAMI. Residues 356–432 are disordered; sequence QNLGPPIPET…EADLGAKEGT (77 aa). Over residues 387 to 404 the composition is skewed to low complexity; sequence AGGAQAPASGESGPSSPA.

The protein belongs to the transient receptor (TC 1.A.4) family. STrpC subfamily. TRPC2 sub-subfamily.

Its subcellular location is the membrane. Thought to form a receptor-activated calcium permeant cation channel. This chain is Short transient receptor potential channel 2 homolog (TRPC2), found in Bos taurus (Bovine).